Here is a 776-residue protein sequence, read N- to C-terminus: MASLIYRQLLTNSYTVDLSDEIQEIGSTKSQNVTINPGPFAQTGYAPVNWGPGEINDSTTVEPLLDGPYQPTTFNPPVDYWMLLAPTTPGVIVEGTNNTDRWLATILIEPNVQSENRTYTIFGIQEQLTVSNTSQDQWKFIDVVKTTANGSIGQYGPLLSSPKLYAVMKHNEKLYTYEGQTPNARTAHYSTTNYDSVNMTAFCDFYIIPRSEESKCTEYINNGLPPIQNTRNVVPLSLTARDVIHYRAQANEDIVISKTSLWKEMQYNRDITIRFKFANTIIKSGGLGYKWSEISFKPANYQYTYTRDGEEVTAHTTCSVNGVNDFSFNGGYLPTDFVVSKFEVIKENSYVYIDYWDDSQAFRNVVYVRSLAANLNSVMCTGGSYNFSLPVGQWPVLTGGAVSLHSAGVTLSTQFTDFVSLNSLRFRFRLAVEEPHFKLTRTRLDRLYGLPAADPNNGKEYYEIAGRFSLISLVPSNDDYQTPIANSVTVRQDLERQLGELREEFNALSQEIAMSQLIDLALLPLDMFSMFSGIKSTIDAAKSMATNVMKKFKKSGLANSVSTLTDSLSDAASSISRGSSIRSIGSSASAWTDVSTQITDISSSVSSVSTQTSTISRRLRLKEMATQTEGMNFDDISAAVLKTKIDKSTQISPNTIPDIVTEASEKFIPNRAYRVINNDDVFEAGIDGKFFAYKVDTFEEIPFDVQKFADLVTDSPVISAIIDFKTLKNLNDNYGITKQQAFNLLRSDPRVLREFINQDNPIIRNRIEQLIMQCRL.

The segment at 65-224 (LDGPYQPTTF…KCTEYINNGL (160 aa)) is spike head. A disulfide bridge links C203 with C216. Positions 248-479 (AQANEDIVIS…LISLVPSNDD (232 aa)) are spike body and stalk (antigen domain). The short motif at 308–310 (DGE) is the DGE motif; interaction with ITGA2/ITGB1 heterodimer element. An intrachain disulfide couples C318 to C380. Positions 389–409 (LPVGQWPVLTGGAVSLHSAGV) are hydrophobic; possible role in virus entry into host cell. The short motif at 448–450 (YGL) is the YGL motif; interaction with ITGA4 element. Positions 484–511 (IANSVTVRQDLERQLGELREEFNALSQE) form a coiled coil. The segment at 510–776 (QEIAMSQLID…IEQLIMQCRL (267 aa)) is spike foot. Residues 644 to 646 (KID) carry the KID motif; interaction with HSPA8 motif.

This sequence belongs to the rotavirus VP4 family. As to quaternary structure, homotrimer. VP4 adopts a dimeric appearance above the capsid surface, while forming a trimeric base anchored inside the capsid layer. Only hints of the third molecule are observed above the capsid surface. It probably performs a series of molecular rearrangements during viral entry. Prior to trypsin cleavage, it is flexible. The priming trypsin cleavage triggers its rearrangement into rigid spikes with approximate two-fold symmetry of their protruding parts. After an unknown second triggering event, cleaved VP4 may undergo another rearrangement, in which two VP5* subunits fold back on themselves and join a third subunit to form a tightly associated trimer, shaped like a folded umbrella. Interacts with VP6. Interacts with VP7. Homotrimer. The trimer is coiled-coil stabilized by its C-terminus, however, its N-terminus, known as antigen domain or 'body', seems to be flexible allowing it to self-associate either as a dimer or a trimer. Interacts with host ITGA2 (via ITAG2 I-domain); this interaction occurs when ITGA2 is part of the integrin heterodimer ITGA2/ITGB1. Interacts with host integrin heterodimer ITGA4/ITGB1 and ITGA4/ITGB7. Proteolytic cleavage by trypsin results in activation of VP4 functions and greatly increases infectivity. The penetration into the host cell is dependent on trypsin treatment of VP4. It produces two peptides, VP5* and VP8* that remain associated with the virion. Cleavage of VP4 by trypsin probably occurs in vivo in the lumen of the intestine prior to infection of enterocytes. Trypsin seems to be incorporated into the three-layered viral particles but remains inactive as long as the viral outer capsid is intact and would only be activated upon the solubilization of the latter.

The protein resides in the virion. It localises to the host rough endoplasmic reticulum. Its subcellular location is the host cell membrane. The protein localises to the host cytoplasm. It is found in the host cytoskeleton. The protein resides in the host endoplasmic reticulum-Golgi intermediate compartment. Its function is as follows. Spike-forming protein that mediates virion attachment to the host epithelial cell receptors and plays a major role in cell penetration, determination of host range restriction and virulence. Rotavirus attachment and entry into the host cell probably involves multiple sequential contacts between the outer capsid proteins VP4 and VP7, and the cell receptors. It is subsequently lost, together with VP7, following virus entry into the host cell. Following entry into the host cell, low intracellular or intravesicular Ca(2+) concentration probably causes the calcium-stabilized VP7 trimers to dissociate from the virion. This step is probably necessary for the membrane-disrupting entry step and the release of VP4, which is locked onto the virion by VP7. During the virus exit from the host cell, VP4 seems to be required to target the newly formed virions to the host cell lipid rafts. Functionally, forms the spike 'foot' and 'body' and acts as a membrane permeabilization protein that mediates release of viral particles from endosomal compartments into the cytoplasm. During entry, the part of VP5* that protrudes from the virus folds back on itself and reorganizes from a local dimer to a trimer. This reorganization may be linked to membrane penetration by exposing VP5* hydrophobic region. In integrin-dependent strains, VP5* targets the integrin heterodimer ITGA2/ITGB1 for cell attachment. In terms of biological role, forms the head of the spikes and mediates the recognition of specific host cell surface glycans. It is the viral hemagglutinin and an important target of neutralizing antibodies. In sialic acid-dependent strains, VP8* binds to host cell sialic acid, most probably a ganglioside, providing the initial contact. In some other strains, VP8* mediates the attachment to histo-blood group antigens (HBGAs) for viral entry. The chain is Outer capsid protein VP4 from Rotavirus A (strain RVA/SA11-Both/G3P5B[2]) (RV-A).